A 155-amino-acid polypeptide reads, in one-letter code: Aspartate carbamoyltransferase regulatory chain (155 aa).

Cysteine 109, cysteine 114, cysteine 138, and cysteine 141 together coordinate Zn(2+).

This sequence belongs to the PyrI family. Contains catalytic and regulatory chains. Requires Zn(2+) as cofactor.

Its function is as follows. Involved in allosteric regulation of aspartate carbamoyltransferase. The polypeptide is Aspartate carbamoyltransferase regulatory chain (Vibrio cholerae serotype O1 (strain ATCC 39315 / El Tor Inaba N16961)).